Here is a 569-residue protein sequence, read N- to C-terminus: Pyrophosphate--fructose 6-phosphate 1-phosphotransferase subunit beta (569 aa).

Glycine 107 contacts diphosphate. Position 201 (aspartate 201) interacts with Mg(2+). Substrate is bound by residues 229 to 231 (TID), 268 to 269 (KY), 276 to 278 (MGR), glutamate 337, and 442 to 445 (YEGR). The active-site Proton acceptor is the aspartate 231.

This sequence belongs to the phosphofructokinase type A (PFKA) family. PPi-dependent PFK group II subfamily. Clade 'Long' sub-subfamily. Tetramer of two alpha (regulatory) and two beta (catalytic) chains. The cofactor is Mg(2+).

It is found in the cytoplasm. The enzyme catalyses beta-D-fructose 6-phosphate + diphosphate = beta-D-fructose 1,6-bisphosphate + phosphate + H(+). The protein operates within carbohydrate degradation; glycolysis; D-glyceraldehyde 3-phosphate and glycerone phosphate from D-glucose: step 3/4. Its activity is regulated as follows. Allosterically activated by fructose 2,6-bisphosphate. Functionally, catalytic subunit of pyrophosphate--fructose 6-phosphate 1-phosphotransferase. Catalyzes the phosphorylation of D-fructose 6-phosphate, the first committing step of glycolysis. Uses inorganic phosphate (PPi) as phosphoryl donor instead of ATP like common ATP-dependent phosphofructokinases (ATP-PFKs), which renders the reaction reversible, and can thus function both in glycolysis and gluconeogenesis. In Solanum tuberosum (Potato), this protein is Pyrophosphate--fructose 6-phosphate 1-phosphotransferase subunit beta.